We begin with the raw amino-acid sequence, 297 residues long: HTH-type transcriptional regulator ArgP (297 aa).

An HTH lysR-type domain is found at 4-60 (PDYRTLQALDAVIRERGFERAAQKLCITQSAVSQRIKQLENTFGQPLLVRTVPPRPT). The H-T-H motif DNA-binding region spans 21–40 (FERAAQKLCITQSAVSQRIK).

Belongs to the LysR transcriptional regulatory family. Homodimer.

Controls the transcription of genes involved in arginine and lysine metabolism. In Cronobacter sakazakii (strain ATCC BAA-894) (Enterobacter sakazakii), this protein is HTH-type transcriptional regulator ArgP.